The following is a 428-amino-acid chain: Anaerobic glycerol-3-phosphate dehydrogenase subunit B (428 aa).

The protein belongs to the anaerobic G-3-P dehydrogenase subunit B family. As to quaternary structure, composed of a catalytic GlpA/B dimer and of membrane bound GlpC. It depends on FMN as a cofactor.

It catalyses the reaction a quinone + sn-glycerol 3-phosphate = dihydroxyacetone phosphate + a quinol. Its pathway is polyol metabolism; glycerol degradation via glycerol kinase pathway; glycerone phosphate from sn-glycerol 3-phosphate (anaerobic route): step 1/1. Its function is as follows. Conversion of glycerol 3-phosphate to dihydroxyacetone. Uses fumarate or nitrate as electron acceptor. The protein is Anaerobic glycerol-3-phosphate dehydrogenase subunit B of Actinobacillus pleuropneumoniae serotype 5b (strain L20).